An 892-amino-acid chain; its full sequence is MEINHDYRVKLFDELGFERKQCTECNQWFWTLDKDRTTCGDSPCDEYSFIGNPITSKKYTYNEMVKEFTNFFDEKGHTPVKRSPVVAKRWRDDILLTIASIAVFQPWVTSGLVKPVKNPLVIAQPCIRLNDIDNVGRTGRHLTCFTMGAHHAFNSKDDYKYWTDKTVEYCFELMQRLGIDGKTITFIESWWEGGGNAGPCYEVITHGVELATLVFMQYKKIGNDYEEIPLKIVDTGYGIERFAWASQGTPTVYESLFSEIIEKLKEDAGIPEVDEKIMAESATLAGLMDIENVGDLRVLRQKVAEKIGMDVDELDKLISPLEYIYAIADHTRCLSFMFGDGIVPSNVKEGYLARLVLRKTLRYMEKIGISMSIKDIISMQLENMKEIYPELSAMKEYIMDVLDAEEKKYIQTVNRGRGIVERMAASKSEITLDDLIELYDSNGLPPEIVKDVVDDLNKKGKKTIAITVPDNFYTIVAERHEEEKPEEVVSTKKELPELEVSKTELLFFKHPTQVEFEAKVLKIVEKYVVLDKTLFYAEGGGQKYDIGQLNDIEVMDVQKKNGIVFHKVSDISKFKEGDTVKGAVNWDNRLKLMRNHTATHVINAAATRVLGKHVWQTGSNVDTEKGRLDITHYERISREQVKEIERIANEIVLSKMPVNSTFMDRNDAEQKYGFTIYQGGVVPGDTLRIIEIEGTDVEACGGTHCSNTSECGYIKVLKTERIQDGVERLEYSTGMGSVSEIASLEDTLIDSAEILGIPNDQLPKTVKRFFEEWKEQKKTIEELQKKVGELVKYELADKFENVGNYEVLVEQVSGTPNELMSIADNLAVGNKLIVLMNENDYLLCKRGENVELSMKDLIRNIGKGGGKDNLAQGKYSENKEQITEKIIQILNK.

The Zn(2+) site is built by H596, H600, C700, and H704.

The protein belongs to the class-II aminoacyl-tRNA synthetase family. Requires Zn(2+) as cofactor.

The protein localises to the cytoplasm. It carries out the reaction tRNA(Ala) + L-alanine + ATP = L-alanyl-tRNA(Ala) + AMP + diphosphate. Its function is as follows. Catalyzes the attachment of alanine to tRNA(Ala) in a two-step reaction: alanine is first activated by ATP to form Ala-AMP and then transferred to the acceptor end of tRNA(Ala). Also edits incorrectly charged Ser-tRNA(Ala) and Gly-tRNA(Ala) via its editing domain. The protein is Alanine--tRNA ligase of Methanococcus maripaludis (strain DSM 14266 / JCM 13030 / NBRC 101832 / S2 / LL).